A 795-amino-acid chain; its full sequence is Oleate activated transcription factor 3 (795 aa).

The segment at residues 14–43 (CSNCKRRKSRCDRGKPACGNCIRLGNRETC) is a DNA-binding region (zn(2)-C6 fungal-type).

The protein belongs to the OAF3 family.

The protein resides in the cytoplasm. The protein localises to the nucleus. Its subcellular location is the mitochondrion. In terms of biological role, transcriptional inhibitor with a significantly increased number of target genes in response to oleate. The sequence is that of Oleate activated transcription factor 3 (OAF3) from Eremothecium gossypii (strain ATCC 10895 / CBS 109.51 / FGSC 9923 / NRRL Y-1056) (Yeast).